The primary structure comprises 190 residues: Threonylcarbamoyl-AMP synthase (190 aa).

In terms of domain architecture, YrdC-like spans 10–190 (PQDKESVYRH…DWHSRQVIRA (181 aa)).

The protein belongs to the SUA5 family. TsaC subfamily.

The protein localises to the cytoplasm. The catalysed reaction is L-threonine + hydrogencarbonate + ATP = L-threonylcarbamoyladenylate + diphosphate + H2O. Its function is as follows. Required for the formation of a threonylcarbamoyl group on adenosine at position 37 (t(6)A37) in tRNAs that read codons beginning with adenine. Catalyzes the conversion of L-threonine, HCO(3)(-)/CO(2) and ATP to give threonylcarbamoyl-AMP (TC-AMP) as the acyladenylate intermediate, with the release of diphosphate. The sequence is that of Threonylcarbamoyl-AMP synthase from Dichelobacter nodosus (strain VCS1703A).